The sequence spans 1014 residues: Protein argonaute 2 (1014 aa).

A compositionally biased stretch (basic and acidic residues) spans 1–15 (MERGGYRGGRGDGRG). The segment at 1–137 (MERGGYRGGR…PSTSTTVVSE (137 aa)) is disordered. 2 stretches are compositionally biased toward gly residues: residues 18-29 (GRGYGGGGGGGE) and 49-58 (RGGGNRGQGR). Positions 83 to 104 (QFQQPRPQVAPQPSQAPASYAG) are enriched in low complexity. Residues 105–114 (SVGGVAGRGA) are compositionally biased toward gly residues. A compositionally biased stretch (low complexity) spans 121-137 (VPSDSASPSTSTTVVSE). In terms of domain architecture, PAZ spans 369-482 (SVIEYLKLYF…VPMEFCDLVE (114 aa)). One can recognise a Piwi domain in the interval 666 to 965 (LVLCAMSRKD…VAFRGRMYHE (300 aa)). Interaction with guide RNA regions lie at residues 857-858 (KR), 900-908 (HHGGIGTSK), and 937-959 (FTRCTKPVSLVPPVYYADMVAFR).

It belongs to the argonaute family. Ago subfamily. As to quaternary structure, interacts with NERD.

Involved in RNA-mediated post-transcriptional gene silencing (PTGS). Main component of the RNA-induced silencing complex (RISC) that binds to a short guide RNA such as microRNA (miRNA) or small interfering RNA (siRNA). RISC uses the mature miRNA or siRNA as a guide for slicer-directed cleavage of homologous mRNAs to repress gene expression. Associates mainly with siRNAs of 21 nucleotide in length and preferentially recruits small RNAs with a 5' terminal adenosine. Probably involved in antiviral RNA silencing. Associates with siRNA derived from cucumber mosaic virus (CMV). Targeted by turnip yellows virus (TuYV) protein P0 (via F-box-like domain) for probable proteasome degradation and thereby inactivating AGO2 function in RNA silencing. Required to direct NERD-dependent DNA methylation and silencing. The chain is Protein argonaute 2 (AGO2) from Arabidopsis thaliana (Mouse-ear cress).